Here is a 404-residue protein sequence, read N- to C-terminus: Cysteine desulfurase IscS (404 aa).

Residues 75–76 (AT), N155, Q183, and 203–205 (SGH) contribute to the pyridoxal 5'-phosphate site. K206 bears the N6-(pyridoxal phosphate)lysine mark. Position 243 (T243) interacts with pyridoxal 5'-phosphate. C328 acts as the Cysteine persulfide intermediate in catalysis. [2Fe-2S] cluster is bound at residue C328.

This sequence belongs to the class-V pyridoxal-phosphate-dependent aminotransferase family. NifS/IscS subfamily. In terms of assembly, homodimer. Forms a heterotetramer with IscU, interacts with other sulfur acceptors. Pyridoxal 5'-phosphate serves as cofactor.

The protein localises to the cytoplasm. The catalysed reaction is (sulfur carrier)-H + L-cysteine = (sulfur carrier)-SH + L-alanine. It functions in the pathway cofactor biosynthesis; iron-sulfur cluster biosynthesis. In terms of biological role, master enzyme that delivers sulfur to a number of partners involved in Fe-S cluster assembly, tRNA modification or cofactor biosynthesis. Catalyzes the removal of elemental sulfur atoms from cysteine to produce alanine. Functions as a sulfur delivery protein for Fe-S cluster synthesis onto IscU, an Fe-S scaffold assembly protein, as well as other S acceptor proteins. This Serratia proteamaculans (strain 568) protein is Cysteine desulfurase IscS.